The following is a 321-amino-acid chain: Glucokinase (321 aa).

10-15 contacts ATP; sequence GDIGGT.

This sequence belongs to the bacterial glucokinase family.

It is found in the cytoplasm. It carries out the reaction D-glucose + ATP = D-glucose 6-phosphate + ADP + H(+). This Marinobacter nauticus (strain ATCC 700491 / DSM 11845 / VT8) (Marinobacter aquaeolei) protein is Glucokinase.